A 656-amino-acid polypeptide reads, in one-letter code: Translation factor GUF1, mitochondrial (656 aa).

The transit peptide at 1–28 (MWKGLLQSTRAAWRGPCVRAPRLPFFRR) directs the protein to the mitochondrion. In terms of domain architecture, tr-type G spans 55 to 235 (ERYRNFSIVA…NVIENIPGPD (181 aa)). Residues 64–71 (AHVDHGKS), 128–132 (DTPGH), and 182–185 (NKID) each bind GTP.

It belongs to the TRAFAC class translation factor GTPase superfamily. Classic translation factor GTPase family. LepA subfamily.

The protein resides in the mitochondrion inner membrane. The enzyme catalyses GTP + H2O = GDP + phosphate + H(+). In terms of biological role, promotes mitochondrial protein synthesis. May act as a fidelity factor of the translation reaction, by catalyzing a one-codon backward translocation of tRNAs on improperly translocated ribosomes. Binds to mitochondrial ribosomes in a GTP-dependent manner. This is Translation factor GUF1, mitochondrial from Yarrowia lipolytica (strain CLIB 122 / E 150) (Yeast).